The sequence spans 353 residues: N-methyltransferase (353 aa).

Positions 171, 195, 218, 238, and 252 each coordinate S-adenosyl-L-homocysteine. Aspartate 218 contributes to the S-adenosyl-L-methionine binding site.

It belongs to the class I-like SAM-binding methyltransferase superfamily. Cation-independent O-methyltransferase family. As to quaternary structure, homodimer. Expressed at high levels in all tissues.

It carries out the reaction 3-methoxytyramine + S-adenosyl-L-methionine = N-methyl-3-methoxytyramine + S-adenosyl-L-homocysteine + H(+). The enzyme catalyses mescaline + S-adenosyl-L-methionine = N-methylmescaline + S-adenosyl-L-homocysteine + H(+). The catalysed reaction is tyramine + S-adenosyl-L-methionine = N-methyltyramine + S-adenosyl-L-homocysteine + H(+). It catalyses the reaction 4-hydroxy-3,5-dimethoxyphenethylamine + S-adenosyl-L-methionine = N-methyl-4-hydroxy-3,5-dimethoxyphenethylamine + S-adenosyl-L-homocysteine + H(+). Its pathway is aromatic compound metabolism. It functions in the pathway alkaloid biosynthesis. Functionally, N-methyltransferase participating in the biosynthesis of natural products derived from phenylethylamine, including mescaline, a natural hallucinogen potentially used in psychotherapeutic treatments. Catalyzes the N-methylation of many substrates, including 3-methoxytyramine, 5-hydroxy-3,4-dimethoxyphenethylamine, 4-hydroxy-3,5-dimethoxyphenethylamine, tyramine and mescaline. The polypeptide is N-methyltransferase (Lophophora williamsii (Peyote)).